The sequence spans 429 residues: Serine--tRNA ligase (429 aa).

Residue 235–237 (TAE) participates in L-serine binding. 266–268 (RSE) provides a ligand contact to ATP. Glutamate 289 serves as a coordination point for L-serine. 353–356 (EISS) provides a ligand contact to ATP. An L-serine-binding site is contributed by serine 389.

The protein belongs to the class-II aminoacyl-tRNA synthetase family. Type-1 seryl-tRNA synthetase subfamily. In terms of assembly, homodimer. The tRNA molecule binds across the dimer.

The protein resides in the cytoplasm. It carries out the reaction tRNA(Ser) + L-serine + ATP = L-seryl-tRNA(Ser) + AMP + diphosphate + H(+). The catalysed reaction is tRNA(Sec) + L-serine + ATP = L-seryl-tRNA(Sec) + AMP + diphosphate + H(+). It functions in the pathway aminoacyl-tRNA biosynthesis; selenocysteinyl-tRNA(Sec) biosynthesis; L-seryl-tRNA(Sec) from L-serine and tRNA(Sec): step 1/1. Catalyzes the attachment of serine to tRNA(Ser). Is also able to aminoacylate tRNA(Sec) with serine, to form the misacylated tRNA L-seryl-tRNA(Sec), which will be further converted into selenocysteinyl-tRNA(Sec). This chain is Serine--tRNA ligase, found in Actinobacillus succinogenes (strain ATCC 55618 / DSM 22257 / CCUG 43843 / 130Z).